Reading from the N-terminus, the 194-residue chain is Imidazole glycerol phosphate synthase subunit HisH (194 aa).

The region spanning 1-194 (MIIIDTGCAN…QLLKNFVENL (194 aa)) is the Glutamine amidotransferase type-1 domain. Residue cysteine 75 is the Nucleophile of the active site. Residues histidine 175 and glutamate 177 contribute to the active site.

Heterodimer of HisH and HisF.

The protein localises to the cytoplasm. It carries out the reaction 5-[(5-phospho-1-deoxy-D-ribulos-1-ylimino)methylamino]-1-(5-phospho-beta-D-ribosyl)imidazole-4-carboxamide + L-glutamine = D-erythro-1-(imidazol-4-yl)glycerol 3-phosphate + 5-amino-1-(5-phospho-beta-D-ribosyl)imidazole-4-carboxamide + L-glutamate + H(+). The catalysed reaction is L-glutamine + H2O = L-glutamate + NH4(+). Its pathway is amino-acid biosynthesis; L-histidine biosynthesis; L-histidine from 5-phospho-alpha-D-ribose 1-diphosphate: step 5/9. IGPS catalyzes the conversion of PRFAR and glutamine to IGP, AICAR and glutamate. The HisH subunit catalyzes the hydrolysis of glutamine to glutamate and ammonia as part of the synthesis of IGP and AICAR. The resulting ammonia molecule is channeled to the active site of HisF. The protein is Imidazole glycerol phosphate synthase subunit HisH of Mannheimia succiniciproducens (strain KCTC 0769BP / MBEL55E).